Here is a 303-residue protein sequence, read N- to C-terminus: tRNA dimethylallyltransferase 1 (303 aa).

9–16 contributes to the ATP binding site; sequence GPTASGKT. 11–16 serves as a coordination point for substrate; it reads TASGKT. 3 interaction with substrate tRNA regions span residues 34 to 37, 158 to 162, and 239 to 244; these read DSAL, QRLIR, and RCVGYR.

This sequence belongs to the IPP transferase family. Monomer. Mg(2+) serves as cofactor.

The catalysed reaction is adenosine(37) in tRNA + dimethylallyl diphosphate = N(6)-dimethylallyladenosine(37) in tRNA + diphosphate. Its function is as follows. Catalyzes the transfer of a dimethylallyl group onto the adenine at position 37 in tRNAs that read codons beginning with uridine, leading to the formation of N6-(dimethylallyl)adenosine (i(6)A). This Shewanella sediminis (strain HAW-EB3) protein is tRNA dimethylallyltransferase 1.